The chain runs to 82 residues: Putative membrane protein insertion efficiency factor (82 aa).

The protein belongs to the UPF0161 family.

It is found in the cell inner membrane. In terms of biological role, could be involved in insertion of integral membrane proteins into the membrane. The sequence is that of Putative membrane protein insertion efficiency factor from Francisella tularensis subsp. holarctica (strain LVS).